The chain runs to 277 residues: ATP synthase subunit delta (277 aa).

The protein belongs to the ATPase delta chain family. In terms of assembly, F-type ATPases have 2 components, F(1) - the catalytic core - and F(0) - the membrane proton channel. F(1) has five subunits: alpha(3), beta(3), gamma(1), delta(1), epsilon(1). F(0) has three main subunits: a(1), b(2) and c(10-14). The alpha and beta chains form an alternating ring which encloses part of the gamma chain. F(1) is attached to F(0) by a central stalk formed by the gamma and epsilon chains, while a peripheral stalk is formed by the delta and b chains.

It is found in the cell membrane. Functionally, f(1)F(0) ATP synthase produces ATP from ADP in the presence of a proton or sodium gradient. F-type ATPases consist of two structural domains, F(1) containing the extramembraneous catalytic core and F(0) containing the membrane proton channel, linked together by a central stalk and a peripheral stalk. During catalysis, ATP synthesis in the catalytic domain of F(1) is coupled via a rotary mechanism of the central stalk subunits to proton translocation. Its function is as follows. This protein is part of the stalk that links CF(0) to CF(1). It either transmits conformational changes from CF(0) to CF(1) or is implicated in proton conduction. This Bifidobacterium animalis subsp. lactis (strain AD011) protein is ATP synthase subunit delta.